The chain runs to 66 residues: Clarkitoxin-1 (66 aa).

4 disulfides stabilise this stretch: Cys3–Cys24, Cys17–Cys42, Cys46–Cys59, and Cys60–Cys65.

Expressed by the venom gland.

It is found in the secreted. Not toxic to mice when injected intravenously or intraperitoneally. This is Clarkitoxin-1 from Micrurus clarki (Clark's coral snake).